Consider the following 394-residue polypeptide: MGIKGLTKLIADNAHGAVKEQKFENYFGRKIAIDASMSIYQFLIVVGRSGSELLTNDAGEVTSHLQGMFNRTIRVLEAGLKPVYVFDGQPPDLKKRELAKRFARREDAAEDLVTAKETGNEADVEKYSKKTVKVTKQHNEDCRKLLRLMGVPVVEAPSEAEAECASLCKAEKVFAVASEDMDSLTYGSTRFLRHLMEPTSRKLPVLEFDIAKVLEGLGLNMDQFVDLCILCGCDYCDTIRGIGPQTALKMIRQHGSLEIVLENLNKDRYQVPDPWPYQEARRLFKEPLVTPPEKVPEFKWTAPDTEGLRQLLVEENGFNNDRVMKAIEKLKVAKNKASQGRLESFFGVSSSSSNKRKEAPDSEASAGKQVKTAAAVKPAKAASKKGPAKGGKKK.

The interval 1-105 (MGIKGLTKLI…RELAKRFARR (105 aa)) is N-domain. Position 34 (aspartate 34) interacts with Mg(2+). Arginine 71 lines the DNA pocket. Aspartate 87, glutamate 159, glutamate 161, aspartate 180, and aspartate 182 together coordinate Mg(2+). Residues 123-254 (DVEKYSKKTV…QTALKMIRQH (132 aa)) are I-domain. Glutamate 159 lines the DNA pocket. Residues glycine 232 and aspartate 234 each coordinate DNA. A Mg(2+)-binding site is contributed by aspartate 234. Residues 338–346 (SQGRLESFF) are interaction with PCNA. The disordered stretch occupies residues 343–394 (ESFFGVSSSSSNKRKEAPDSEASAGKQVKTAAAVKPAKAASKKGPAKGGKKK). Residues 368–381 (KQVKTAAAVKPAKA) are compositionally biased toward low complexity. The span at 382–394 (ASKKGPAKGGKKK) shows a compositional bias: basic residues.

Belongs to the XPG/RAD2 endonuclease family. FEN1 subfamily. As to quaternary structure, interacts with PCNA. Three molecules of FEN1 bind to one PCNA trimer with each molecule binding to one PCNA monomer. PCNA stimulates the nuclease activity without altering cleavage specificity. The cofactor is Mg(2+). In terms of processing, phosphorylated. Phosphorylation upon DNA damage induces relocalization to the nuclear plasma.

The protein localises to the nucleus. It is found in the nucleolus. The protein resides in the nucleoplasm. It localises to the mitochondrion. Its function is as follows. Structure-specific nuclease with 5'-flap endonuclease and 5'-3' exonuclease activities involved in DNA replication and repair. During DNA replication, cleaves the 5'-overhanging flap structure that is generated by displacement synthesis when DNA polymerase encounters the 5'-end of a downstream Okazaki fragment. It enters the flap from the 5'-end and then tracks to cleave the flap base, leaving a nick for ligation. Also involved in the long patch base excision repair (LP-BER) pathway, by cleaving within the apurinic/apyrimidinic (AP) site-terminated flap. Acts as a genome stabilization factor that prevents flaps from equilibrating into structures that lead to duplications and deletions. Also possesses 5'-3' exonuclease activity on nicked or gapped double-stranded DNA, and exhibits RNase H activity. Also involved in replication and repair of rDNA and in repairing mitochondrial DNA. In Physcomitrium patens (Spreading-leaved earth moss), this protein is Flap endonuclease 1-A.